The primary structure comprises 229 residues: Potassium/proton antiporter CemA (229 aa).

3 helical membrane passes run 6–26 (AFIPFFYFLSIVFLPWLISLC), 107–127 (ILHFSTNLISFVILSGYSFWG), and 189–209 (ILSGLVSTFPVILDTIFKYWI).

This sequence belongs to the CemA family.

Its subcellular location is the plastid. It localises to the chloroplast inner membrane. It catalyses the reaction K(+)(in) + H(+)(out) = K(+)(out) + H(+)(in). Functionally, contributes to K(+)/H(+) antiport activity by supporting proton efflux to control proton extrusion and homeostasis in chloroplasts in a light-dependent manner to modulate photosynthesis. Prevents excessive induction of non-photochemical quenching (NPQ) under continuous-light conditions. Indirectly promotes efficient inorganic carbon uptake into chloroplasts. The polypeptide is Potassium/proton antiporter CemA (Arabidopsis thaliana (Mouse-ear cress)).